We begin with the raw amino-acid sequence, 382 residues long: Chaperone protein DnaJ (382 aa).

The J domain maps to 5 to 70; sequence DYYEVLGVSR…DKKAAYDRYG (66 aa). Residues 141-219 form a CR-type zinc finger; the sequence is GVQKTINVPA…CHGAGRVEKE (79 aa). Cys-154, Cys-157, Cys-171, Cys-174, Cys-193, Cys-196, Cys-207, and Cys-210 together coordinate Zn(2+). CXXCXGXG motif repeat units follow at residues 154 to 161, 171 to 178, 193 to 200, and 207 to 214; these read CDSCKGTG, CPTCSGMG, CPTCNGMG, and CKSCHGAG.

It belongs to the DnaJ family. Homodimer. Zn(2+) serves as cofactor.

It localises to the cytoplasm. Functionally, participates actively in the response to hyperosmotic and heat shock by preventing the aggregation of stress-denatured proteins and by disaggregating proteins, also in an autonomous, DnaK-independent fashion. Unfolded proteins bind initially to DnaJ; upon interaction with the DnaJ-bound protein, DnaK hydrolyzes its bound ATP, resulting in the formation of a stable complex. GrpE releases ADP from DnaK; ATP binding to DnaK triggers the release of the substrate protein, thus completing the reaction cycle. Several rounds of ATP-dependent interactions between DnaJ, DnaK and GrpE are required for fully efficient folding. Also involved, together with DnaK and GrpE, in the DNA replication of plasmids through activation of initiation proteins. The sequence is that of Chaperone protein DnaJ from Cereibacter sphaeroides (strain ATCC 17025 / ATH 2.4.3) (Rhodobacter sphaeroides).